A 211-amino-acid polypeptide reads, in one-letter code: Cyclin-dependent kinase inhibitor 3 (211 aa).

The tract at residues methionine 1–valine 20 is disordered. The segment at methionine 1 to leucine 34 is interaction with CDK2. The Tyrosine-protein phosphatase domain occupies leucine 32–serine 200. Cysteine 140 serves as the catalytic Phosphocysteine intermediate.

This sequence belongs to the protein-tyrosine phosphatase family. Interacts with cyclin-dependent kinases such as CDK1, CDK2 and CDK3. Does not interact with CDK4. Interacts (via C-terminus) with phosphorylated CDK2 (via C-terminal helix). Interacts with MS4A3 (via C-terminus); the interaction enhances CDKN3 enzymatic activity.

The protein localises to the cytoplasm. It is found in the perinuclear region. It catalyses the reaction O-phospho-L-tyrosyl-[protein] + H2O = L-tyrosyl-[protein] + phosphate. The catalysed reaction is O-phospho-L-seryl-[protein] + H2O = L-seryl-[protein] + phosphate. It carries out the reaction O-phospho-L-threonyl-[protein] + H2O = L-threonyl-[protein] + phosphate. Its function is as follows. May play a role in cell cycle regulation. Dual specificity phosphatase active toward substrates containing either phosphotyrosine or phosphoserine residues. Dephosphorylates CDK2 at 'Thr-160' in a cyclin-dependent manner. The sequence is that of Cyclin-dependent kinase inhibitor 3 from Mus musculus (Mouse).